Here is a 318-residue protein sequence, read N- to C-terminus: Type II methyltransferase M.HaeII (318 aa).

Residues 4–304 form the SAM-dependent MTase C5-type domain; sequence YKTIDLFAGI…GSMINSLNMA (301 aa). Cys73 is an active-site residue.

Belongs to the class I-like SAM-binding methyltransferase superfamily. C5-methyltransferase family.

It catalyses the reaction a 2'-deoxycytidine in DNA + S-adenosyl-L-methionine = a 5-methyl-2'-deoxycytidine in DNA + S-adenosyl-L-homocysteine + H(+). In terms of biological role, a methylase, recognizes the double-stranded sequence 5'-RGCGCY-3', methylates C-? on both strands, and protects the DNA from cleavage by the HaeII endonuclease. This chain is Type II methyltransferase M.HaeII (haeIIM), found in Haemophilus aegyptius.